Here is a 1236-residue protein sequence, read N- to C-terminus: DNA topoisomerase 2 (1236 aa).

ATP is bound by residues N65, N96, 124-126 (SSN), 137-144 (GRHGYGAK), and 354-356 (QSK). The Toprim domain occupies 434 to 548 (RTLIITEGDS…KLLQNNPGYI (115 aa)). 3 residues coordinate Mg(2+): E440, D517, and D519. Residues 685 to 1101 (IPHCVDGLKP…TPVKMWLTEL (417 aa)) form the Topo IIA-type catalytic domain. Catalysis depends on Y775, which acts as the O-(5'-phospho-DNA)-tyrosine intermediate. Residues 956 to 965 (ALAQRIYING) form an interaction with DNA region. Positions 1161-1211 (YEKPPPSKRRPGESVGGARPSDSAARTVGKRLVGSRSEFKNKKPMSRKNNV) are disordered.

The protein belongs to the type II topoisomerase family. Homodimer. It depends on Mg(2+) as a cofactor. The cofactor is Mn(2+). Ca(2+) is required as a cofactor.

The protein resides in the nucleus. The catalysed reaction is ATP-dependent breakage, passage and rejoining of double-stranded DNA.. Its function is as follows. Control of topological states of DNA by transient breakage and subsequent rejoining of DNA strands. Topoisomerase II makes double-strand breaks. In Leishmania chagasi, this protein is DNA topoisomerase 2 (TOP2).